The following is a 244-amino-acid chain: Claudin-12 (244 aa).

Topologically, residues 1 to 10 (MGCRDVHAAT) are cytoplasmic. A helical membrane pass occupies residues 11-31 (VLSFLCGIASVAGLFAGTLLP). Residues 32 to 87 (NWRKLRLITFNRNEKNLTVYTGLWVKCARYDGGNDCLMYDAAWYSSVDQLDLRVLQ) are Extracellular-facing. A helical membrane pass occupies residues 88–108 (FALPLSILIAMGALLLCLIGM). Topologically, residues 109–135 (CNTAFRSSVPNIKLAKCLVNSAGCHLV) are cytoplasmic. A helical transmembrane segment spans residues 136-156 (AGLLFFLAGTVSLSPSIWVIF). Over 157–174 (YNIHLNRKFEPVFAFDYA) the chain is Extracellular. Residues 175-195 (VYVTVASAGGLFMTALLLFIW) traverse the membrane as a helical segment. At 196-244 (YCACKSLPSPFWQPLYSHPPGMHTYSQPYSARSRLSAIEIDIPVVSHTT) the chain is on the cytoplasmic side. Ser-228 and Ser-231 each carry phosphoserine.

This sequence belongs to the claudin family. As to quaternary structure, interacts with OCLN.

The protein resides in the cell junction. Its subcellular location is the tight junction. It localises to the cell membrane. Functionally, plays a major role in tight junction-specific obliteration of the intercellular space, through calcium-independent cell-adhesion activity. In Bos taurus (Bovine), this protein is Claudin-12 (CLDN12).